A 355-amino-acid polypeptide reads, in one-letter code: Uroporphyrinogen decarboxylase (355 aa).

Residues R27–R31, D77, Y154, T209, and H328 contribute to the substrate site.

This sequence belongs to the uroporphyrinogen decarboxylase family. As to quaternary structure, homodimer.

The protein resides in the cytoplasm. It carries out the reaction uroporphyrinogen III + 4 H(+) = coproporphyrinogen III + 4 CO2. Its pathway is porphyrin-containing compound metabolism; protoporphyrin-IX biosynthesis; coproporphyrinogen-III from 5-aminolevulinate: step 4/4. Catalyzes the decarboxylation of four acetate groups of uroporphyrinogen-III to yield coproporphyrinogen-III. The polypeptide is Uroporphyrinogen decarboxylase (Aliivibrio salmonicida (strain LFI1238) (Vibrio salmonicida (strain LFI1238))).